A 293-amino-acid chain; its full sequence is Prohibitin-2 (293 aa).

The chain crosses the membrane as a helical; Signal-anchor for type II membrane protein span at residues 21-41 (FGGGFGLLALGGVGLLALSSL). A coiled-coil region spans residues 190 to 235 (GREYAAAIEAKQVAQQEAERARFLVEKALQDKRSIIVKAEGEAQSA).

This sequence belongs to the prohibitin family. In terms of assembly, the mitochondrial prohibitin complex consists of two subunits (PHB1 and PHB2), assembled into a membrane-associated ring-shaped supercomplex of approximately 1 mDa.

The protein localises to the mitochondrion inner membrane. Its subcellular location is the cytoplasm. It is found in the nucleus. The protein resides in the cell membrane. In terms of biological role, protein with pleiotropic attributes mediated in a cell-compartment- and tissue-specific manner, which include the plasma membrane-associated cell signaling functions, mitochondrial chaperone, and transcriptional co-regulator of transcription factors and sex steroid hormones in the nucleus. Functionally, in the mitochondria, together with PHB, forms large ring complexes (prohibitin complexes) in the inner mitochondrial membrane (IMM) and functions as a chaperone protein that stabilizes mitochondrial respiratory enzymes and maintains mitochondrial integrity in the IMM, which is required for mitochondrial morphogenesis, neuronal survival, and normal lifespan. In the nucleus, serves as transcriptional co-regulator. This Dictyostelium discoideum (Social amoeba) protein is Prohibitin-2 (phbB).